A 202-amino-acid polypeptide reads, in one-letter code: uncharacterized protein (202 aa).

An N-terminal signal peptide occupies residues 1–19; that stretch reads MRRKNGFSVASVFILCSIA. A helical membrane pass occupies residues 177–199; the sequence is FLASSSSSFSSFLPSIAIILFFV.

It is found in the membrane. This is an uncharacterized protein from Caenorhabditis elegans.